The sequence spans 200 residues: BREX protein BrxB (200 aa).

This sequence belongs to the BrxB family.

Its function is as follows. BREX systems (bacteriophage exclusion) provide immunity against bacteriophage. Part of a type 1 BREX system which protects against dsDNA phage. This system allows phage adsorption but prevents phage DNA replication, without degradation of the phage DNA. Methylation of bacterial DNA by PglX guides self/non-self discrimination. When the brxA-brxB-brxC-pglX-pglZ-brxL genes are transformed into a susceptible E.coli strain (BW25113) they confer very high resistance to infection by bacteriophage VR7 and VpaE1, about 100-fold protection against lambda, T5 and T7 and no protection against RNA phage Qbeta, ssDNA phage M13 or dSDNA phage T4 and VR5. Glycosylated phage DNA is not susceptible to BREX. The BREX system does not confer resistance to lysogenic lambda phage, i.e. prophage that are integrated into the chromosomal DNA and then induced to form phage. This is BREX protein BrxB from Escherichia coli O9:H4 (strain HS).